The following is a 228-amino-acid chain: Octanoyltransferase (228 aa).

The region spanning Asp-32–Trp-214 is the BPL/LPL catalytic domain. Substrate is bound by residues Arg-77 to His-84, Ser-144 to Gly-146, and Gly-157 to Ala-159. Catalysis depends on Cys-175, which acts as the Acyl-thioester intermediate.

Belongs to the LipB family.

It localises to the cytoplasm. The catalysed reaction is octanoyl-[ACP] + L-lysyl-[protein] = N(6)-octanoyl-L-lysyl-[protein] + holo-[ACP] + H(+). Its pathway is protein modification; protein lipoylation via endogenous pathway; protein N(6)-(lipoyl)lysine from octanoyl-[acyl-carrier-protein]: step 1/2. In terms of biological role, catalyzes the transfer of endogenously produced octanoic acid from octanoyl-acyl-carrier-protein onto the lipoyl domains of lipoate-dependent enzymes. Lipoyl-ACP can also act as a substrate although octanoyl-ACP is likely to be the physiological substrate. The protein is Octanoyltransferase of Syntrophobacter fumaroxidans (strain DSM 10017 / MPOB).